The following is a 338-amino-acid chain: D-erythrose-4-phosphate dehydrogenase (338 aa).

12–13 (RI) lines the NAD(+) pocket. Residues 154 to 156 (SCT), R200, 213 to 214 (TK), and R236 contribute to the substrate site. C155 (nucleophile) is an active-site residue. N318 provides a ligand contact to NAD(+).

Belongs to the glyceraldehyde-3-phosphate dehydrogenase family. Epd subfamily. As to quaternary structure, homotetramer.

The protein localises to the cytoplasm. The enzyme catalyses D-erythrose 4-phosphate + NAD(+) + H2O = 4-phospho-D-erythronate + NADH + 2 H(+). Its pathway is cofactor biosynthesis; pyridoxine 5'-phosphate biosynthesis; pyridoxine 5'-phosphate from D-erythrose 4-phosphate: step 1/5. Catalyzes the NAD-dependent conversion of D-erythrose 4-phosphate to 4-phosphoerythronate. The polypeptide is D-erythrose-4-phosphate dehydrogenase (Yersinia pestis bv. Antiqua (strain Antiqua)).